Here is a 184-residue protein sequence, read N- to C-terminus: Photosystem I assembly protein Ycf4 (184 aa).

Helical transmembrane passes span 22-42 (FGWACILFLGSLGFLVVGASS) and 57-77 (IVFFPQGIVMSFYGIAGLFIS).

The protein belongs to the Ycf4 family.

It is found in the plastid. It localises to the chloroplast thylakoid membrane. Functionally, seems to be required for the assembly of the photosystem I complex. This Acorus calamus (Sweet flag) protein is Photosystem I assembly protein Ycf4.